The primary structure comprises 390 residues: MKLFYFFLLSFLSSYIIAFSFKSTQSAHFILSVGRCNENYGNNIKKNRLYSTNNDHLKLLKYVREVTNASIQLCNKALKECNNDVDKAIEHVRKNTKSSTFVSTNIKVKKEGLVASQIKDDKIVLLELLTDSDFVARNKMFVQFVYSLLNVTLDNDLSVGNCKNAGDNKNSEDGYTTSGNILSNNNIMDEILSLPYVDEENKSNSTMREQLNYLRNIFREDIKIGRFSKYSKKNPNEFLHYYIHNKLDDHVGLSGVLLVLHINNLDEILKTKKEDIVNFANDLSMHIISAKPASVSIDTLNPKITKKEMDIIRDGLKDMKKPENILNNMIQGKMKKFYSSIVFLEQEYMLDETKRKVSQVIKDFGKDHNINISVNHFNYFAIGEKNVLME.

It belongs to the EF-Ts family.

The protein localises to the mitochondrion. Associates with the EF-Tu.GDP complex and induces the exchange of GDP to GTP. It remains bound to the aminoacyl-tRNA.EF-Tu.GTP complex up to the GTP hydrolysis stage on the ribosome. This chain is Elongation factor Ts, mitochondrial, found in Plasmodium falciparum (isolate 3D7).